The primary structure comprises 197 residues: Translation machinery-associated protein 22 (197 aa).

An SUI1 domain is found at 103–174 (IRIKRVERNK…DVREFLIKNY (72 aa)).

The protein belongs to the DENR family. As to quaternary structure, interacts with the 40S ribosomal subunit.

The protein localises to the cytoplasm. The chain is Translation machinery-associated protein 22 (tma22) from Botryotinia fuckeliana (strain B05.10) (Noble rot fungus).